A 353-amino-acid chain; its full sequence is MTEPLKPRIDFDGPLEVEQNPKFRAQQTFDENQAQNFAPATLDEAQEEEGQVEAVMDAALRPKRSLWRKMVMGGLALFGASVVGQGVQWTMNAWQTQDWVALGGCAAGALIIGAGVGSVVTEWRRLWRLRQRAHERDEARDLLHSHGTGKGRAFCEKLAQQAGIDQSHPALQRWYASIHETQNDREVVSLYAHLVQPVLDAQARREISRSAAESTLMIAVSPLALVDMAFIAWRNLRLINRIATLYGIELGYYSRLRLFKLVLLNIAFAGASELVREVGMDWMSQDLAARLSTRAAQGIGAGLLTARLGIKAMELCRPLPWIDDDKPRLGDFRRQLIGQVKETLQKGKTPSEK.

Residues M1–K69 are Periplasmic-facing. A helical membrane pass occupies residues M70 to T90. Topologically, residues M91–W99 are cytoplasmic. The helical transmembrane segment at V100–V120 threads the bilayer. The Periplasmic segment spans residues T121–A212. The chain crosses the membrane as a helical span at residues E213–W233. The Cytoplasmic portion of the chain corresponds to R234–K353.

This sequence belongs to the UPF0283 family.

Its subcellular location is the cell inner membrane. The sequence is that of UPF0283 membrane protein YcjF (ycjF) from Escherichia coli O157:H7.